We begin with the raw amino-acid sequence, 453 residues long: MERTCLAVILAAGDSTRMKSSKSKVLHPVAGRPMIAHVVEAVASAGISSVALVVGRDAEEVAKAASIDGVGIESYLQKDRLGTGHAVLAARDAIAKGYDDILVTYGDVPLQTDAPLKAARQGLADGSDIVVIGFHSDRPTGYGRLLVKDGELIAIREEKDATDAERTVTWCNSGLMAINGRKALDLLSRIGNSNAKGEFYLTDLVEIARSLGGRVTAVDAPEIEMTGCNNRAELAVIERFWQERRRREMMLAGVTMIAPETVFLSYDTIIGQDALIEPNVVFGPGAVIDSGAVIHAFSHIEGAHVSEGATVGPFGRLRPGADLANGAKVGNFCEVKNGRIGEGAKVNHLTYIGDAVVGAGSNIGAGTITCNYDGVNKSETVIGENAFIGSNSSLVAPVTIGDGAYVGSGSVITADVPADALALGRARQEIKPERAKLLRERALAIKAAKRAKA.

The tract at residues 1–231 (MERTCLAVIL…EIEMTGCNNR (231 aa)) is pyrophosphorylase. UDP-N-acetyl-alpha-D-glucosamine is bound by residues 10–13 (LAAG), Lys-24, Gln-77, 82–83 (GT), 105–107 (YGD), Gly-143, Glu-157, Asn-172, and Asn-229. Mg(2+) is bound at residue Asp-107. Asn-229 provides a ligand contact to Mg(2+). Residues 232-252 (AELAVIERFWQERRRREMMLA) are linker. Residues 253 to 453 (GVTMIAPETV…AIKAAKRAKA (201 aa)) are N-acetyltransferase. UDP-N-acetyl-alpha-D-glucosamine contacts are provided by Arg-318 and Lys-336. Catalysis depends on His-348, which acts as the Proton acceptor. Residues Tyr-351 and Asn-362 each coordinate UDP-N-acetyl-alpha-D-glucosamine. Acetyl-CoA-binding positions include Ala-365, 371–372 (NY), Ser-390, Ser-408, and Arg-425.

This sequence in the N-terminal section; belongs to the N-acetylglucosamine-1-phosphate uridyltransferase family. In the C-terminal section; belongs to the transferase hexapeptide repeat family. In terms of assembly, homotrimer. The cofactor is Mg(2+).

The protein localises to the cytoplasm. The catalysed reaction is alpha-D-glucosamine 1-phosphate + acetyl-CoA = N-acetyl-alpha-D-glucosamine 1-phosphate + CoA + H(+). It carries out the reaction N-acetyl-alpha-D-glucosamine 1-phosphate + UTP + H(+) = UDP-N-acetyl-alpha-D-glucosamine + diphosphate. The protein operates within nucleotide-sugar biosynthesis; UDP-N-acetyl-alpha-D-glucosamine biosynthesis; N-acetyl-alpha-D-glucosamine 1-phosphate from alpha-D-glucosamine 6-phosphate (route II): step 2/2. Its pathway is nucleotide-sugar biosynthesis; UDP-N-acetyl-alpha-D-glucosamine biosynthesis; UDP-N-acetyl-alpha-D-glucosamine from N-acetyl-alpha-D-glucosamine 1-phosphate: step 1/1. It participates in bacterial outer membrane biogenesis; LPS lipid A biosynthesis. In terms of biological role, catalyzes the last two sequential reactions in the de novo biosynthetic pathway for UDP-N-acetylglucosamine (UDP-GlcNAc). The C-terminal domain catalyzes the transfer of acetyl group from acetyl coenzyme A to glucosamine-1-phosphate (GlcN-1-P) to produce N-acetylglucosamine-1-phosphate (GlcNAc-1-P), which is converted into UDP-GlcNAc by the transfer of uridine 5-monophosphate (from uridine 5-triphosphate), a reaction catalyzed by the N-terminal domain. This chain is Bifunctional protein GlmU, found in Rhizobium etli (strain CIAT 652).